A 239-amino-acid chain; its full sequence is ATP-dependent dethiobiotin synthetase BioD (239 aa).

15 to 20 (EIGKTF) contributes to the ATP binding site. Threonine 19 provides a ligand contact to Mg(2+). The active site involves lysine 40. Residues aspartate 57, 118–121 (EGVG), and 178–179 (NH) contribute to the ATP site. Residues aspartate 57 and glutamate 118 each coordinate Mg(2+).

This sequence belongs to the dethiobiotin synthetase family. Homodimer. Mg(2+) is required as a cofactor.

It localises to the cytoplasm. It catalyses the reaction (7R,8S)-7,8-diammoniononanoate + CO2 + ATP = (4R,5S)-dethiobiotin + ADP + phosphate + 3 H(+). It functions in the pathway cofactor biosynthesis; biotin biosynthesis; biotin from 7,8-diaminononanoate: step 1/2. In terms of biological role, catalyzes a mechanistically unusual reaction, the ATP-dependent insertion of CO2 between the N7 and N8 nitrogen atoms of 7,8-diaminopelargonic acid (DAPA, also called 7,8-diammoniononanoate) to form a ureido ring. In Burkholderia cenocepacia (strain HI2424), this protein is ATP-dependent dethiobiotin synthetase BioD.